The sequence spans 204 residues: Large ribosomal subunit protein bL17 (204 aa).

Residues 124 to 204 (QAVGEAERAR…DDDGPAESKS (81 aa)) are disordered. The segment covering 128–142 (EAERARGTRFSERRK) has biased composition (basic and acidic residues). Over residues 156-191 (SESPTAAAVAAQSAEEQAPVEETLTAQAAETSAATV) the composition is skewed to low complexity. Residues 192–204 (EETDDDGPAESKS) are compositionally biased toward acidic residues.

This sequence belongs to the bacterial ribosomal protein bL17 family. Part of the 50S ribosomal subunit. Contacts protein L32.

The polypeptide is Large ribosomal subunit protein bL17 (Frankia alni (strain DSM 45986 / CECT 9034 / ACN14a)).